Consider the following 262-residue polypeptide: Probable carboxylesterase Culp3 (262 aa).

The N-terminal stretch at 1-41 (MNNRPIRLLTSGRAGLGAGALITAVVLLIALGAVWTPVAFA) is a signal peptide. Residues Cys-44 and Cys-114 are joined by a disulfide bond. Catalysis depends on Ser-125, which acts as the Nucleophile. Cys-188 and Cys-195 are oxidised to a cystine. Residue Asp-192 is part of the active site. His-206 acts as the Proton donor/acceptor in catalysis. The segment at 241 to 262 (LPGSVLQMPGTAAPAPESLHGR) is disordered.

It belongs to the cutinase family.

It localises to the secreted. Its function is as follows. Shows weak esterase activity with the p-nitrophenol-linked aliphatic ester pNP-butyrate. Does not exhibit cutinase activity. The sequence is that of Probable carboxylesterase Culp3 (cut3) from Mycobacterium tuberculosis (strain ATCC 25618 / H37Rv).